A 279-amino-acid chain; its full sequence is Movement protein (279 aa).

The protein belongs to the cucumovirus movement protein family.

The protein resides in the host cell junction. Its subcellular location is the host plasmodesma. Its function is as follows. Transports viral genome to neighboring plant cells directly through plasmosdesmata, without any budding. The movement protein allows efficient cell to cell propagation, by bypassing the host cell wall barrier. Acts by forming a tubular structure at the host plasmodesmata, enlarging it enough to allow free passage of virion capsids. This Cucumber mosaic virus (strain Ixora) (CMV) protein is Movement protein.